A 191-amino-acid polypeptide reads, in one-letter code: MSKNRLPAYPALANELRSASLGINPAELQGLLTGMLSGGLSLNDKSWQALVFDYTNDGMGWPIGALASAEQILLAMSAQLVDTDFELSLLLPEGEGEEALFELADAVAEWINHFISGLGLSGANLKHASVEAKEALEDLEEMSKLGIDEEDDLAEQAELLEQVIEHIKACVLVLHAEFGVKPEQDTKPTVH.

This sequence belongs to the UPF0149 family.

The sequence is that of UPF0149 protein VCM66_2399 from Vibrio cholerae serotype O1 (strain M66-2).